The sequence spans 178 residues: MPRSALLCCLILLAGVAASRDQGTQSENSCAHFPASLPHMLRELRAAFGRVKTFFQMKDQLDNMLLTRSLLEDFKGYLGCQALSEMIQFYLEEVMPQAENHGPDIKEHVNSLGEKLKTLRLRLRRCHRFLPCENKSKAVEQVRGVFSKLQEKGVYKAMSEFDIFINYIEAYMTMKMKN.

Residues 1-18 (MPRSALLCCLILLAGVAA) form the signal peptide. 2 disulfides stabilise this stretch: cysteine 30-cysteine 126 and cysteine 80-cysteine 132. The N-linked (GlcNAc...) asparagine glycan is linked to asparagine 134.

The protein belongs to the IL-10 family. As to quaternary structure, homodimer. Interacts with IL10RA and IL10RB.

It localises to the secreted. In terms of biological role, major immune regulatory cytokine that acts on many cells of the immune system where it has profound anti-inflammatory functions, limiting excessive tissue disruption caused by inflammation. Mechanistically, IL10 binds to its heterotetrameric receptor comprising IL10RA and IL10RB leading to JAK1 and STAT2-mediated phosphorylation of STAT3. In turn, STAT3 translocates to the nucleus where it drives expression of anti-inflammatory mediators. Targets antigen-presenting cells (APCs) such as macrophages and monocytes and inhibits their release of pro-inflammatory cytokines including granulocyte-macrophage colony-stimulating factor /GM-CSF, granulocyte colony-stimulating factor/G-CSF, IL-1 alpha, IL-1 beta, IL-6, IL-8 and TNF-alpha. Also interferes with antigen presentation by reducing the expression of MHC-class II and co-stimulatory molecules, thereby inhibiting their ability to induce T cell activation. In addition, controls the inflammatory response of macrophages by reprogramming essential metabolic pathways including mTOR signaling. This Lama glama (Llama) protein is Interleukin-10 (IL10).